A 359-amino-acid chain; its full sequence is DNA polymerase IV (359 aa).

Residues 7 to 188 (IIHIDMDAFY…IPIGKFFGVG (182 aa)) enclose the UmuC domain. Positions 11 and 106 each coordinate Mg(2+). E107 is an active-site residue.

The protein belongs to the DNA polymerase type-Y family. In terms of assembly, monomer. Requires Mg(2+) as cofactor.

It localises to the cytoplasm. The catalysed reaction is DNA(n) + a 2'-deoxyribonucleoside 5'-triphosphate = DNA(n+1) + diphosphate. Functionally, poorly processive, error-prone DNA polymerase involved in untargeted mutagenesis. Copies undamaged DNA at stalled replication forks, which arise in vivo from mismatched or misaligned primer ends. These misaligned primers can be extended by PolIV. Exhibits no 3'-5' exonuclease (proofreading) activity. May be involved in translesional synthesis, in conjunction with the beta clamp from PolIII. This is DNA polymerase IV from Clostridium perfringens (strain ATCC 13124 / DSM 756 / JCM 1290 / NCIMB 6125 / NCTC 8237 / Type A).